The sequence spans 290 residues: Tubulin beta-4B chain (290 aa).

The MREI motif signature appears at 1-4 (MREI). Residue Gln11 participates in GTP binding. Thr55 bears the Phosphothreonine mark. Lys58 carries the post-translational modification N6-acetyllysine. Positions 69, 138, 142, 143, 144, and 172 each coordinate GTP. Residue Glu69 participates in Mg(2+) binding.

This sequence belongs to the tubulin family. As to quaternary structure, dimer of alpha and beta chains. A typical microtubule is a hollow water-filled tube with an outer diameter of 25 nm and an inner diameter of 15 nM. Alpha-beta heterodimers associate head-to-tail to form protofilaments running lengthwise along the microtubule wall with the beta-tubulin subunit facing the microtubule plus end conferring a structural polarity. Microtubules usually have 13 protofilaments but different protofilament numbers can be found in some organisms and specialized cells. Component of sperm flagellar doublet microtubules. It depends on Mg(2+) as a cofactor. Some glutamate residues at the C-terminus are polyglycylated, resulting in polyglycine chains on the gamma-carboxyl group. Glycylation is mainly limited to tubulin incorporated into axonemes (cilia and flagella) whereas glutamylation is prevalent in neuronal cells, centrioles, axonemes, and the mitotic spindle. Both modifications can coexist on the same protein on adjacent residues, and lowering polyglycylation levels increases polyglutamylation, and reciprocally. Cilia and flagella glycylation is required for their stability and maintenance. Flagella glycylation controls sperm motility. In terms of processing, some glutamate residues at the C-terminus are polyglutamylated, resulting in polyglutamate chains on the gamma-carboxyl group. Polyglutamylation plays a key role in microtubule severing by spastin (SPAST). SPAST preferentially recognizes and acts on microtubules decorated with short polyglutamate tails: severing activity by SPAST increases as the number of glutamates per tubulin rises from one to eight, but decreases beyond this glutamylation threshold. Glutamylation is also involved in cilia motility.

The protein localises to the cytoplasm. The protein resides in the cytoskeleton. Its subcellular location is the flagellum axoneme. In terms of biological role, tubulin is the major constituent of microtubules, a cylinder consisting of laterally associated linear protofilaments composed of alpha- and beta-tubulin heterodimers. Microtubules grow by the addition of GTP-tubulin dimers to the microtubule end, where a stabilizing cap forms. Below the cap, tubulin dimers are in GDP-bound state, owing to GTPase activity of alpha-tubulin. The sequence is that of Tubulin beta-4B chain (TUBB4B) from Mesocricetus auratus (Golden hamster).